We begin with the raw amino-acid sequence, 122 residues long: UPF0102 protein Mpe_A3766 (122 aa).

The protein belongs to the UPF0102 family.

The sequence is that of UPF0102 protein Mpe_A3766 from Methylibium petroleiphilum (strain ATCC BAA-1232 / LMG 22953 / PM1).